The sequence spans 152 residues: Calcium-binding protein SPEC 1A (152 aa).

EF-hand domains lie at 10–45 (EEVT…TGKS), 46–81 (YTDK…QMVK), 84–119 (WKEE…SKPP), and 120–152 (MKRK…IKSC). The Ca(2+) site is built by aspartate 23, aspartate 25, serine 27, serine 29, glutamate 34, aspartate 59, aspartate 61, serine 63, threonine 65, glutamate 70, aspartate 97, aspartate 99, asparagine 101, serine 103, glutamate 108, aspartate 133, asparagine 135, aspartate 137, lysine 139, and glutamate 144. Residues 95 to 121 (DMDKDGNGSLSPQELREALSASKPPMK) form a disordered region.

As to expression, found in cell lineages giving rise to the aboral ectoderm, a squamous epithelium covering the surface of the late stage embryo and larva.

In terms of biological role, calcium-binding protein involved in larval development and metamorphosis. Likely to function as calcium buffers mediating the transport of calcium from the sea water to the blastocoel where calcium is required for skeleton formation. This is Calcium-binding protein SPEC 1A (SPEC1) from Strongylocentrotus purpuratus (Purple sea urchin).